The chain runs to 198 residues: Imidazoleglycerol-phosphate dehydratase (198 aa).

This sequence belongs to the imidazoleglycerol-phosphate dehydratase family.

The protein resides in the cytoplasm. The enzyme catalyses D-erythro-1-(imidazol-4-yl)glycerol 3-phosphate = 3-(imidazol-4-yl)-2-oxopropyl phosphate + H2O. The protein operates within amino-acid biosynthesis; L-histidine biosynthesis; L-histidine from 5-phospho-alpha-D-ribose 1-diphosphate: step 6/9. This is Imidazoleglycerol-phosphate dehydratase from Janthinobacterium sp. (strain Marseille) (Minibacterium massiliensis).